Here is a 318-residue protein sequence, read N- to C-terminus: Putative S-adenosyl-L-methionine-dependent methyltransferase BCG_0781c (318 aa).

Residues Asp135 and 164–165 each bind S-adenosyl-L-methionine; that span reads DL.

The protein belongs to the UPF0677 family.

Exhibits S-adenosyl-L-methionine-dependent methyltransferase activity. The polypeptide is Putative S-adenosyl-L-methionine-dependent methyltransferase BCG_0781c (Mycobacterium bovis (strain BCG / Pasteur 1173P2)).